Consider the following 578-residue polypeptide: Proline--tRNA ligase (578 aa).

Belongs to the class-II aminoacyl-tRNA synthetase family. ProS type 1 subfamily. Homodimer.

The protein localises to the cytoplasm. It carries out the reaction tRNA(Pro) + L-proline + ATP = L-prolyl-tRNA(Pro) + AMP + diphosphate. Its function is as follows. Catalyzes the attachment of proline to tRNA(Pro) in a two-step reaction: proline is first activated by ATP to form Pro-AMP and then transferred to the acceptor end of tRNA(Pro). As ProRS can inadvertently accommodate and process non-cognate amino acids such as alanine and cysteine, to avoid such errors it has two additional distinct editing activities against alanine. One activity is designated as 'pretransfer' editing and involves the tRNA(Pro)-independent hydrolysis of activated Ala-AMP. The other activity is designated 'posttransfer' editing and involves deacylation of mischarged Ala-tRNA(Pro). The misacylated Cys-tRNA(Pro) is not edited by ProRS. The polypeptide is Proline--tRNA ligase (Burkholderia pseudomallei (strain 668)).